Reading from the N-terminus, the 204-residue chain is Large ribosomal subunit protein uL4 (204 aa).

The interval 44–76 (KRQGTQSAKTRSEVRGGGIKPWRQKGTGRARQG) is disordered.

This sequence belongs to the universal ribosomal protein uL4 family. In terms of assembly, part of the 50S ribosomal subunit.

Functionally, one of the primary rRNA binding proteins, this protein initially binds near the 5'-end of the 23S rRNA. It is important during the early stages of 50S assembly. It makes multiple contacts with different domains of the 23S rRNA in the assembled 50S subunit and ribosome. In terms of biological role, forms part of the polypeptide exit tunnel. The chain is Large ribosomal subunit protein uL4 from Clostridium perfringens (strain 13 / Type A).